Consider the following 468-residue polypeptide: 3-isopropylmalate dehydratase large subunit (468 aa).

[4Fe-4S] cluster-binding residues include cysteine 345, cysteine 405, and cysteine 408.

Belongs to the aconitase/IPM isomerase family. LeuC type 1 subfamily. As to quaternary structure, heterodimer of LeuC and LeuD. [4Fe-4S] cluster is required as a cofactor.

The catalysed reaction is (2R,3S)-3-isopropylmalate = (2S)-2-isopropylmalate. It functions in the pathway amino-acid biosynthesis; L-leucine biosynthesis; L-leucine from 3-methyl-2-oxobutanoate: step 2/4. Functionally, catalyzes the isomerization between 2-isopropylmalate and 3-isopropylmalate, via the formation of 2-isopropylmaleate. The polypeptide is 3-isopropylmalate dehydratase large subunit (Oceanobacillus iheyensis (strain DSM 14371 / CIP 107618 / JCM 11309 / KCTC 3954 / HTE831)).